Consider the following 308-residue polypeptide: Acetyl-coenzyme A carboxylase carboxyl transferase subunit beta (308 aa).

Residues 46–308 form the CoA carboxyltransferase N-terminal domain; sequence LWVKCPDTGE…LMMGRGLKAA (263 aa).

The protein belongs to the AccD/PCCB family. As to quaternary structure, acetyl-CoA carboxylase is a heterohexamer composed of biotin carboxyl carrier protein (AccB), biotin carboxylase (AccC) and two subunits each of ACCase subunit alpha (AccA) and ACCase subunit beta (AccD).

The protein localises to the cytoplasm. The catalysed reaction is N(6)-carboxybiotinyl-L-lysyl-[protein] + acetyl-CoA = N(6)-biotinyl-L-lysyl-[protein] + malonyl-CoA. It participates in lipid metabolism; malonyl-CoA biosynthesis; malonyl-CoA from acetyl-CoA: step 1/1. Its function is as follows. Component of the acetyl coenzyme A carboxylase (ACC) complex. Biotin carboxylase (BC) catalyzes the carboxylation of biotin on its carrier protein (BCCP) and then the CO(2) group is transferred by the transcarboxylase to acetyl-CoA to form malonyl-CoA. This is Acetyl-coenzyme A carboxylase carboxyl transferase subunit beta from Caulobacter sp. (strain K31).